Consider the following 272-residue polypeptide: Dermonecrotic toxin LvSicTox-alphaIC1bv (272 aa).

The active site involves His5. Positions 25 and 27 each coordinate Mg(2+). Catalysis depends on His41, which acts as the Nucleophile. Disulfide bonds link Cys45-Cys51 and Cys47-Cys189. Asp84 is a binding site for Mg(2+).

It belongs to the arthropod phospholipase D family. Class II subfamily. Mg(2+) serves as cofactor. As to expression, expressed by the venom gland.

It localises to the secreted. The enzyme catalyses an N-(acyl)-sphingosylphosphocholine = an N-(acyl)-sphingosyl-1,3-cyclic phosphate + choline. The catalysed reaction is an N-(acyl)-sphingosylphosphoethanolamine = an N-(acyl)-sphingosyl-1,3-cyclic phosphate + ethanolamine. It catalyses the reaction a 1-acyl-sn-glycero-3-phosphocholine = a 1-acyl-sn-glycero-2,3-cyclic phosphate + choline. It carries out the reaction a 1-acyl-sn-glycero-3-phosphoethanolamine = a 1-acyl-sn-glycero-2,3-cyclic phosphate + ethanolamine. Its function is as follows. Dermonecrotic toxins cleave the phosphodiester linkage between the phosphate and headgroup of certain phospholipids (sphingolipid and lysolipid substrates), forming an alcohol (often choline) and a cyclic phosphate. This toxin acts on sphingomyelin (SM). It may also act on ceramide phosphoethanolamine (CPE), lysophosphatidylcholine (LPC) and lysophosphatidylethanolamine (LPE), but not on lysophosphatidylserine (LPS), and lysophosphatidylglycerol (LPG). It acts by transphosphatidylation, releasing exclusively cyclic phosphate products as second products. Induces dermonecrosis, hemolysis, increased vascular permeability, edema, inflammatory response, and platelet aggregation. This chain is Dermonecrotic toxin LvSicTox-alphaIC1bv, found in Loxosceles variegata (Recluse spider).